The following is a 329-amino-acid chain: MASQLTDAFARKFYYLRLSITDVCNFRCTYCLPDGYKPGGVTNNGFLTVDEIRRVTRAFASLGTEKVRLTGGEPSLRRDFTDIIAAVGENDAIRQIAVTTNGYRLARDAASWREAGLTGVNVSVDSLDARQFHAITGQDKFRQVMAGIDAAFDAGFKKVKVNTVLMRDVNHHQLDTFLAWIQPRPIQLRFIELMETGEGSDLFRKHHISGQVLRDELIKRGWIHQLRQRSDGPAQVFCHPDYVGEIGLIMPYEKDFCATCNRLRVSSVGKLHLCLFGDGGVSLRDLLQDDAQQYALEERISDALREKKQTHFLHQSNTGITQNLSYIGG.

A Radical SAM core domain is found at 8 to 234 (AFARKFYYLR…QLRQRSDGPA (227 aa)). Arg17 provides a ligand contact to GTP. 2 residues coordinate [4Fe-4S] cluster: Cys24 and Cys28. Residue Tyr30 participates in S-adenosyl-L-methionine binding. A [4Fe-4S] cluster-binding site is contributed by Cys31. Arg68 is a binding site for GTP. Gly72 lines the S-adenosyl-L-methionine pocket. Thr99 contributes to the GTP binding site. Ser123 contributes to the S-adenosyl-L-methionine binding site. Lys160 contacts GTP. Position 194 (Met194) interacts with S-adenosyl-L-methionine. [4Fe-4S] cluster is bound by residues Cys257 and Cys260. 262–264 (RLR) lines the GTP pocket. Residue Cys274 participates in [4Fe-4S] cluster binding.

It belongs to the radical SAM superfamily. MoaA family. In terms of assembly, monomer and homodimer. The cofactor is [4Fe-4S] cluster.

The enzyme catalyses GTP + AH2 + S-adenosyl-L-methionine = (8S)-3',8-cyclo-7,8-dihydroguanosine 5'-triphosphate + 5'-deoxyadenosine + L-methionine + A + H(+). Its pathway is cofactor biosynthesis; molybdopterin biosynthesis. Its function is as follows. Catalyzes the cyclization of GTP to (8S)-3',8-cyclo-7,8-dihydroguanosine 5'-triphosphate. The sequence is that of GTP 3',8-cyclase from Salmonella heidelberg (strain SL476).